The primary structure comprises 396 residues: Acetyl-CoA acetyltransferase ERG10, cytosolic (396 aa).

The Acyl-thioester intermediate role is filled by Cys91. Position 186 (Tyr186) interacts with K(+). Asn227 and Lys230 together coordinate CoA. K(+) contacts are provided by Ala246, Pro247, and Val347. Active-site proton acceptor residues include His351 and Cys381. A chloride-binding site is contributed by Asn382.

The protein belongs to the thiolase-like superfamily. Thiolase family. As to quaternary structure, homotetramer. K(+) serves as cofactor.

The protein localises to the cytoplasm. Its subcellular location is the cytosol. The catalysed reaction is 2 acetyl-CoA = acetoacetyl-CoA + CoA. Its pathway is metabolic intermediate biosynthesis; (R)-mevalonate biosynthesis; (R)-mevalonate from acetyl-CoA: step 1/3. Acetyl-CoA acetyltransferase; part of the first module of ergosterol biosynthesis pathway that includes the early steps of the pathway, conserved across all eukaryotes, and which results in the formation of mevalonate from acetyl-coenzyme A (acetyl-CoA). ERG10B catalyzes the formation of acetoacetyl-CoA from acetyl-CoA. The first module starts with the action of the cytosolic acetyl-CoA acetyltransferase ERG10B that catalyzes the formation of acetoacetyl-CoA. The hydroxymethylglutaryl-CoA synthases ERG13 then condenses acetyl-CoA with acetoacetyl-CoA to form HMG-CoA. The rate-limiting step of the early module is the reduction to mevalonate by the 3-hydroxy-3-methylglutaryl-coenzyme A (HMG-CoA) reductases HMG1. The polypeptide is Acetyl-CoA acetyltransferase ERG10, cytosolic (Gibberella zeae (strain ATCC MYA-4620 / CBS 123657 / FGSC 9075 / NRRL 31084 / PH-1) (Wheat head blight fungus)).